A 229-amino-acid chain; its full sequence is Uracil-DNA glycosylase (229 aa).

Catalysis depends on aspartate 64, which acts as the Proton acceptor.

Belongs to the uracil-DNA glycosylase (UDG) superfamily. UNG family.

The protein resides in the cytoplasm. The enzyme catalyses Hydrolyzes single-stranded DNA or mismatched double-stranded DNA and polynucleotides, releasing free uracil.. Its function is as follows. Excises uracil residues from the DNA which can arise as a result of misincorporation of dUMP residues by DNA polymerase or due to deamination of cytosine. This chain is Uracil-DNA glycosylase, found in Salmonella arizonae (strain ATCC BAA-731 / CDC346-86 / RSK2980).